A 134-amino-acid chain; its full sequence is ATP synthase epsilon chain (134 aa).

It belongs to the ATPase epsilon chain family. In terms of assembly, F-type ATPases have 2 components, CF(1) - the catalytic core - and CF(0) - the membrane proton channel. CF(1) has five subunits: alpha(3), beta(3), gamma(1), delta(1), epsilon(1). CF(0) has three main subunits: a, b and c.

It is found in the cell membrane. Its function is as follows. Produces ATP from ADP in the presence of a proton gradient across the membrane. This is ATP synthase epsilon chain from Listeria welshimeri serovar 6b (strain ATCC 35897 / DSM 20650 / CCUG 15529 / CIP 8149 / NCTC 11857 / SLCC 5334 / V8).